Here is a 363-residue protein sequence, read N- to C-terminus: Transcription factor Sox-18A (363 aa).

A disordered region spans residues 20 to 66 (NSTWVPPADTVPEVSLIPSSPPAPDSPAPSPKPGYGFSTCEEKHGDP). The segment covering 38–51 (SSPPAPDSPAPSPK) has biased composition (pro residues). Positions 68–136 (IRRPMNAFMV…QHLQDHPNYK (69 aa)) form a DNA-binding region, HMG box. Interaction with DNA regions lie at residues 70 to 83 (RPMNAFMVWAKDER) and 94 to 106 (HNAVLSKMLGQSW). The tract at residues 129–163 (LQDHPNYKYRPRRKKQAKKLKRMDPSPLLRNEGFT) is disordered. The segment covering 135-149 (YKYRPRRKKQAKKLK) has biased composition (basic residues). An important for transcriptional activation region spans residues 149 to 210 (KRMDPSPLLR…VLEPSEPAFF (62 aa)). Residues 236–362 (KTMREISLPY…TAMYYTPCIT (127 aa)) form the Sox C-terminal domain. The 9aaTAD motif lies at 308–316 (NEFDQYLNM).

Expressed in the adult spleen, lung, heart and kidney, and at a lower level in the adult testis, liver and brain.

It is found in the nucleus. Its function is as follows. Probable transcription factor. Binds to the consensus DNA sequence 5'-AACAAT-3'. Also binds 5'-CACAAT-3' and 5'-AATAAT-3' with similar affinity. This Xenopus laevis (African clawed frog) protein is Transcription factor Sox-18A (sox18-a).